Here is a 252-residue protein sequence, read N- to C-terminus: MTTKADKSDDGKVRGRYLLKLSGEAFSGGGGLGVDPDVVHAIAREIAAVVRDGSEIAVVIGGGNFFRGAELQQRGMDRARSDYMGMLGTVMNCLALQDFLEKEGIDSRVQTAITMGQVAEPYIPLRAVRHLEKGRVVIFGAGMGMPYFSTDTTAAQRALEIDAEALLMGKNGVDGVYDSDPKTNPEAVKFDSLSYGEVITRDLKVADMTAITLCRDNKLPILVFELLAEGNIARAVKGEKIGTLVGDQGSRD.

Residue 20–23 (KLSG) participates in ATP binding. Residues 28-33 (GGGGLG) form an involved in allosteric activation by GTP region. Position 62 (Gly62) interacts with UMP. Gly63 and Arg67 together coordinate ATP. Residues Asp82 and 143-150 (MGMPYFST) each bind UMP. Asn171, Tyr177, and Asp180 together coordinate ATP.

The protein belongs to the UMP kinase family. Homohexamer.

It localises to the cytoplasm. It catalyses the reaction UMP + ATP = UDP + ADP. It functions in the pathway pyrimidine metabolism; CTP biosynthesis via de novo pathway; UDP from UMP (UMPK route): step 1/1. With respect to regulation, allosterically activated by GTP. Inhibited by UTP. Its function is as follows. Catalyzes the reversible phosphorylation of UMP to UDP. This Streptomyces avermitilis (strain ATCC 31267 / DSM 46492 / JCM 5070 / NBRC 14893 / NCIMB 12804 / NRRL 8165 / MA-4680) protein is Uridylate kinase.